We begin with the raw amino-acid sequence, 571 residues long: MEEKELRDLVRRYALENAARYGGRANPNAVMKKIMKEHEELRPRAKEVLKTVREVVREVNKMSGEEIRRELEELGGPREDVARDKEGLKPLPGAEPGNVRLRFAPNPSGPLHIGHARAAVLNDEYARRYDGTLVLRIEDTDPRRVDPEAYDMIEEDLEWLGVNIDERYVQSNRIELYYMVCEELLEREGAYVCTCDPDEFRRLRDVGRACPCRSRDKEENLELWEEMLDGTFSEGEAVVRVKTEVDHPDPAVREWIAFRIVEEEHPMTGSRYLVWPTMNFAVAVDDHLMNITHVLRGKDHESNTRRQKYVFEHLGWDTPEYVHYGILKVEGAVLSTSEIRRGIDSGEYTGWDDVRVATLRALRRRGIKPEAIRETILEIGLTDVDATFSWEHLYARNRKMIDPESHRYFFVRDPVELRIEGMKESVLARLPLHPDRDEGERVLILHPENGVARALLDGEDAEDLWEGDVVRLMNAVNVEIEEVGDGWLRGRYHSDDYRIAKEEGAQIVHWVPPDQAVRCEVVRPDGSVESGYAEINVEREQAGSTVQFERLYFVRLEEVSSGGVRAVYAHD.

Residues 75–88 (GGPREDVARDKEGL) show a composition bias toward basic and acidic residues. Positions 75 to 98 (GGPREDVARDKEGLKPLPGAEPGN) are disordered. The short motif at 105 to 115 (PNPSGPLHIGH) is the 'HIGH' region element.

Belongs to the class-I aminoacyl-tRNA synthetase family. Glutamate--tRNA ligase type 2 subfamily.

The protein resides in the cytoplasm. It carries out the reaction tRNA(Glu) + L-glutamate + ATP = L-glutamyl-tRNA(Glu) + AMP + diphosphate. Catalyzes the attachment of glutamate to tRNA(Glu) in a two-step reaction: glutamate is first activated by ATP to form Glu-AMP and then transferred to the acceptor end of tRNA(Glu). The protein is Glutamate--tRNA ligase of Methanopyrus kandleri (strain AV19 / DSM 6324 / JCM 9639 / NBRC 100938).